A 122-amino-acid chain; its full sequence is Large ribosomal subunit protein uL14 (122 aa).

Belongs to the universal ribosomal protein uL14 family. In terms of assembly, part of the 50S ribosomal subunit. Forms a cluster with proteins L3 and L19. In the 70S ribosome, L14 and L19 interact and together make contacts with the 16S rRNA in bridges B5 and B8.

Functionally, binds to 23S rRNA. Forms part of two intersubunit bridges in the 70S ribosome. The protein is Large ribosomal subunit protein uL14 of Mycoplasma pneumoniae (strain ATCC 29342 / M129 / Subtype 1) (Mycoplasmoides pneumoniae).